A 363-amino-acid polypeptide reads, in one-letter code: 3-isopropylmalate dehydrogenase (363 aa).

NAD(+) is bound at residue 78 to 91 (GKRWDHLPINERPE). Residues R99, R109, R138, and D227 each coordinate substrate. Residues D227, D251, and D255 each coordinate Mg(2+). 285–297 (GSAPDIAGKNTAN) serves as a coordination point for NAD(+).

The protein belongs to the isocitrate and isopropylmalate dehydrogenases family. LeuB type 1 subfamily. Homodimer. Mg(2+) is required as a cofactor. Requires Mn(2+) as cofactor.

It is found in the cytoplasm. The enzyme catalyses (2R,3S)-3-isopropylmalate + NAD(+) = 4-methyl-2-oxopentanoate + CO2 + NADH. It functions in the pathway amino-acid biosynthesis; L-leucine biosynthesis; L-leucine from 3-methyl-2-oxobutanoate: step 3/4. In terms of biological role, catalyzes the oxidation of 3-carboxy-2-hydroxy-4-methylpentanoate (3-isopropylmalate) to 3-carboxy-4-methyl-2-oxopentanoate. The product decarboxylates to 4-methyl-2 oxopentanoate. The sequence is that of 3-isopropylmalate dehydrogenase from Buchnera aphidicola subsp. Uroleucon helianthicola.